A 367-amino-acid chain; its full sequence is F-box only protein 25 (367 aa).

Positions 1–83 (MPFLGQDWRS…NDTNTQSFYR (83 aa)) are interaction with beta-actin. Residues 226 to 274 (LTLSDLPLHMLNNILYRFSDGWDIITLGQVTPTLYMLSEDRQLWKKLCQ) form the F-box domain.

Part of a SCF (SKP1-cullin-F-box) protein ligase complex consisting of FBXO25, SKP1, CUL1 and RBX1. Interacts directly with SKP1 and CUL1. Interacts (via C-terminus) with beta-actin (via N-terminus). Expressed in all brain tissue observed.

It is found in the nucleus. It functions in the pathway protein modification; protein ubiquitination. Functionally, substrate-recognition component of the SCF (SKP1-CUL1-F-box protein)-type E3 ubiquitin ligase complex. May play a role in accumulation of expanded polyglutamine (polyQ) protein huntingtin (HTT). In Homo sapiens (Human), this protein is F-box only protein 25 (FBXO25).